The primary structure comprises 359 residues: HTH-type transcriptional regulator Rv3575c (359 aa).

The 56-residue stretch at 9–64 folds into the HTH lacI-type domain; the sequence is ATLASLAAELKVSRTTVSNAFNRPDQLSADLRERVLATAKRLGYAGPDPVARSLRT. Positions 11–30 form a DNA-binding region, H-T-H motif; it reads LASLAAELKVSRTTVSNAFN.

In terms of biological role, transcriptional regulator that negatively regulates transcription of the mce4 operon, which is involved in cholesterol transport and utilization. Acts by binding to the promoter region of the mce4 operon. It affects the utilization of host cholesterol as a carbon source, impacting the host's innate immune response. This is HTH-type transcriptional regulator Rv3575c from Mycobacterium tuberculosis (strain ATCC 25618 / H37Rv).